A 193-amino-acid chain; its full sequence is Phosphoheptose isomerase (193 aa).

Positions 37–193 (LADSFKAGGK…QLIEKEMVKA (157 aa)) constitute an SIS domain. Substrate is bound at residue 52-54 (NGG). Zn(2+) contacts are provided by His61 and Glu65. Residues Glu65, 93-94 (ND), 119-121 (STS), Ser124, and Gln172 each bind substrate. Residues Gln172 and His180 each contribute to the Zn(2+) site.

Belongs to the SIS family. GmhA subfamily. Homotetramer. The cofactor is Zn(2+).

It is found in the cytoplasm. The catalysed reaction is 2 D-sedoheptulose 7-phosphate = D-glycero-alpha-D-manno-heptose 7-phosphate + D-glycero-beta-D-manno-heptose 7-phosphate. Its pathway is carbohydrate biosynthesis; D-glycero-D-manno-heptose 7-phosphate biosynthesis; D-glycero-alpha-D-manno-heptose 7-phosphate and D-glycero-beta-D-manno-heptose 7-phosphate from sedoheptulose 7-phosphate: step 1/1. Catalyzes the isomerization of sedoheptulose 7-phosphate in D-glycero-D-manno-heptose 7-phosphate. The sequence is that of Phosphoheptose isomerase from Yersinia enterocolitica serotype O:8 / biotype 1B (strain NCTC 13174 / 8081).